A 225-amino-acid chain; its full sequence is Glutathione S-transferase zeta class (225 aa).

The GST N-terminal domain occupies 10–91 (PKLKLYSYFR…YLEEKYPEHP (82 aa)). Glutathione contacts are provided by residues 20–25 (SSCSFR), Gln49, Val63, 75–76 (DS), Gln115, and 119–121 (NLA). Positions 96–221 (DIHKKAINYQ…MPDKQPDSTS (126 aa)) constitute a GST C-terminal domain.

This sequence belongs to the GST superfamily. Zeta family.

It is found in the cytoplasm. The enzyme catalyses RX + glutathione = an S-substituted glutathione + a halide anion + H(+). This Euphorbia esula (Leafy spurge) protein is Glutathione S-transferase zeta class.